Here is a 423-residue protein sequence, read N- to C-terminus: uncharacterized protein (423 aa).

An N-terminal signal peptide occupies residues 1-16 (MKSRIFFITLLTIVAA). The Extracellular portion of the chain corresponds to 17-402 (QESADQLCSS…SSSAKEEQTS (386 aa)). Disulfide bonds link Cys24-Cys217, Cys33-Cys43, Cys36-Cys68, Cys46-Cys57, Cys219-Cys238, Cys230-Cys241, Cys243-Cys252, Cys254-Cys288, Cys271-Cys286, Cys280-Cys291, Cys293-Cys303, Cys305-Cys327, Cys310-Cys325, Cys319-Cys330, Cys332-Cys341, and Cys343-Cys350. Asn65 carries N-linked (GlcNAc...) asparagine glycosylation. The interval 215–350 (CGCECEKHPE…CSCSTASNNC (136 aa)) is cysteine-rich tandem repeats. I-EGF domains are found at residues 219-253 (CEKHPEINSRLCHQNGHLVCGQCVCDQSRGGDKCE), 254-304 (CPLA…KFCQ), and 305-342 (CDNDSCPLAVNGKVCSGNGVCDCGVCKCEMGWERDDCS). N-linked (GlcNAc...) asparagine glycosylation is present at Asn274. N-linked (GlcNAc...) asparagine glycosylation is present at Asn307. The disordered stretch occupies residues 354–406 (GTPAPEEKDKPESVPEEPEATEKPDDMPSDSDLEKELDESSSAKEEQTSSSGV). The segment covering 380–392 (MPSDSDLEKELDE) has biased composition (acidic residues). Residues 403–421 (SSGVVSRVCVLLTFFLLVL) form a helical membrane-spanning segment. The Cytoplasmic portion of the chain corresponds to 422 to 423 (NF).

It belongs to the integrin beta chain family.

It is found in the membrane. This is an uncharacterized protein from Caenorhabditis elegans.